A 249-amino-acid polypeptide reads, in one-letter code: MGLPQPGLWLKRLWVLLEVAVHVVVGKVLLILFPDRVKRNILAMGEKTGMTRNPHFSHDNWIPTFFSTQYFWFVLKVRWQRLEDTTELGGLAPNCPVVRLSGQRCNIWEFMQGNRPLVLNFGSCTUPSFMFKFDQFKRLIEDFSSIADFLVIYIEEAHASDGWAFKNNMDIRNHQNLQDRLQAAHLLLARSPQCPVVVDTMQNQSSQLYAALPERLYIIQEGRILYKGKSGPWNYNPEEVRAVLEKLHS.

Over 1–12 (MGLPQPGLWLKR) the chain is Extracellular. A helical; Signal-anchor for type III membrane protein membrane pass occupies residues 13 to 33 (LWVLLEVAVHVVVGKVLLILF). The Cytoplasmic segment spans residues 34–249 (PDRVKRNILA…VRAVLEKLHS (216 aa)). Sec126 is an active-site residue. Sec126 is a non-standard amino acid (selenocysteine).

This sequence belongs to the iodothyronine deiodinase family. As to quaternary structure, predominantly monomer. Can form homodimers but homodimerization is not essential for enzyme activity.

Its subcellular location is the cell membrane. The protein resides in the endoplasmic reticulum membrane. It is found in the basolateral cell membrane. It catalyses the reaction 3,3',5-triiodo-L-thyronine + iodide + A + H(+) = L-thyroxine + AH2. The enzyme catalyses 3,3',5'-triiodo-L-thyronine + iodide + A + H(+) = L-thyroxine + AH2. It carries out the reaction 3,3'-diiodo-L-thyronine + iodide + A + H(+) = 3,3',5'-triiodo-L-thyronine + AH2. The catalysed reaction is 3,3'-diiodo-L-thyronine + iodide + A + H(+) = 3,3',5-triiodo-L-thyronine + AH2. It catalyses the reaction 3'-iodo-L-thyronine + iodide + A + H(+) = 3',5'-diiodo-L-thyronine + AH2. The enzyme catalyses 3-iodo-L-thyronine + iodide + A + H(+) = 3,5-diiodo-L-thyronine + AH2. It carries out the reaction 3-iodo-L-thyronine + iodide + A + H(+) = 3,3'-diiodo-L-thyronine + AH2. The catalysed reaction is 3,3'-diiodothyronamine + iodide + A + H(+) = 3,3',5'-triiodothyronamine + AH2. It catalyses the reaction 3'-iodothyronamine + iodide + A + H(+) = 3',5'-diiodothyronamine + AH2. The enzyme catalyses 3-iodothyronamine + iodide + A + H(+) = 3,3'-diiodothyronamine + AH2. It carries out the reaction 3,3'-diiodothyronamine + iodide + A + H(+) = 3,3',5-triiodothyronamine + AH2. The catalysed reaction is 3-iodothyronamine + iodide + A + H(+) = 3,5-diiodothyronamine + AH2. It catalyses the reaction 3,3'-diiodo-L-thyronine sulfate + iodide + A + H(+) = 3,3',5'-triiodo-L-thyronine sulfate + AH2. The enzyme catalyses 3,3',5'-triiodo-L-thyronine sulfate + iodide + A + H(+) = L-thyroxine sulfate + AH2. It carries out the reaction 3,3'-diiodo-L-thyronine sulfate + iodide + A + H(+) = 3,3',5-triiodo-L-thyronine sulfate + AH2. Its activity is regulated as follows. Deiodination of substrates 3,3',5'-triiodothyronine, 3,3',5'-triiodothyronamine and 3',5'- diiodothyronamine are inhibited by 6n-propyl-2-thiouracil (PTU). Functionally, plays a crucial role in the metabolism of thyroid hormones (TH) and has specific roles in TH activation and inactivation by deiodination. Catalyzes the deiodination of L-thyroxine (T4) to 3,5,3'-triiodothyronine (T3), 3,3',5'-triiodothyronine (rT3) to 3,3'-diiodothyronine (3,3'-T2) and 3',5'-diiodothyronine (3',5'-T2) to 3'-monoiodothyronine (3'-T1) via outer-ring deiodination (ORD). Catalyzes the deiodination of T4 to 3,3',5'-triiodothyronine (rT3) via inner-ring deiodination (IRD). Catalyzes the deiodination of T3 to 3,3'-T2, 3,5-diiodothyronine (3,5-T2) to 3- monoiodothyronine (3-T1) and 3,3'-T2 to 3-T1 via IRD. Catalyzes the phenolic ring deiodinations of 3,3',5'-triiodothyronamine and 3',5'-diiodothyronamine. Catalyzes the phenolic ring deiodination of 3,3'-diiodothyronamine and tyrosyl ring deiodinations of 3,5,3'-triiodothyronamine and 3,5-diiodothyronamine. Catalyzes the deiodination of L-thyroxine sulfate and 3,3',5-triiodo-L-thyronine sulfate via IRD and of 3,3',5'-triiodo-L-thyronine sulfate via ORD. In Homo sapiens (Human), this protein is Type I iodothyronine deiodinase (DIO1).